A 413-amino-acid polypeptide reads, in one-letter code: Mitochondrial inner membrane magnesium transporter MFM1 (413 aa).

A mitochondrion-targeting transit peptide spans M1–D35. The N-linked (GlcNAc...) asparagine glycan is linked to N202. A helical transmembrane segment spans residues L329 to L349. The YGMN signature appears at Y353–N356. A helical membrane pass occupies residues A367–I387.

The protein belongs to the CorA metal ion transporter (MIT) (TC 1.A.35) family. Forms homooligomers. Interacts with MRS2. In terms of processing, N-glycosylated. Glycosylation is important for correct localization of the protein.

Its subcellular location is the mitochondrion inner membrane. Its function is as follows. Mitochondrial inner membrane magnesium transporter required for mitochondrial magnesium homeostasis. Modulates the conductance of the MRS2 channel. Involved in the splicing of mRNA group II introns in mitochondria by affecting mitochondrial magnesium concentrations, which are critical for group II intron splicing. In Saccharomyces cerevisiae (strain ATCC 204508 / S288c) (Baker's yeast), this protein is Mitochondrial inner membrane magnesium transporter MFM1 (MFM1).